Consider the following 347-residue polypeptide: Serpentine receptor class beta-2 (347 aa).

A run of 7 helical transmembrane segments spans residues 27–47 (IAQL…YIFL), 62–82 (FLLV…AFLF), 108–128 (GNLS…GFSI), 146–166 (FLGP…LYHV), 194–214 (FWEL…FLLV), 246–266 (LIVS…TIFV), and 288–308 (ITVP…LSFM).

Belongs to the nematode receptor-like protein srb family.

Its subcellular location is the membrane. In Caenorhabditis elegans, this protein is Serpentine receptor class beta-2 (srb-2).